Consider the following 101-residue polypeptide: NAD(P)H-quinone oxidoreductase subunit 4L, chloroplastic (101 aa).

The next 3 helical transmembrane spans lie at 2-22 (ILEH…YGLI), 32-52 (MCLE…SDFF), and 61-81 (IFCI…LAIV).

It belongs to the complex I subunit 4L family. NDH is composed of at least 16 different subunits, 5 of which are encoded in the nucleus.

It localises to the plastid. Its subcellular location is the chloroplast thylakoid membrane. It catalyses the reaction a plastoquinone + NADH + (n+1) H(+)(in) = a plastoquinol + NAD(+) + n H(+)(out). The enzyme catalyses a plastoquinone + NADPH + (n+1) H(+)(in) = a plastoquinol + NADP(+) + n H(+)(out). In terms of biological role, NDH shuttles electrons from NAD(P)H:plastoquinone, via FMN and iron-sulfur (Fe-S) centers, to quinones in the photosynthetic chain and possibly in a chloroplast respiratory chain. The immediate electron acceptor for the enzyme in this species is believed to be plastoquinone. Couples the redox reaction to proton translocation, and thus conserves the redox energy in a proton gradient. The sequence is that of NAD(P)H-quinone oxidoreductase subunit 4L, chloroplastic from Lepidium virginicum (Virginia pepperweed).